Consider the following 220-residue polypeptide: Ribose-5-phosphate isomerase A (220 aa).

Substrate-binding positions include 29–32 (TGST), 82–85 (DGCD), and 95–98 (KGGG). The Proton acceptor role is filled by glutamate 104. Lysine 122 contributes to the substrate binding site.

It belongs to the ribose 5-phosphate isomerase family. Homodimer.

The enzyme catalyses aldehydo-D-ribose 5-phosphate = D-ribulose 5-phosphate. The protein operates within carbohydrate degradation; pentose phosphate pathway; D-ribose 5-phosphate from D-ribulose 5-phosphate (non-oxidative stage): step 1/1. In terms of biological role, catalyzes the reversible conversion of ribose-5-phosphate to ribulose 5-phosphate. In Laribacter hongkongensis (strain HLHK9), this protein is Ribose-5-phosphate isomerase A.